The following is a 78-amino-acid chain: MEFRDQVLDLLTEVAETNVIKENPDVELFEEGIIDSFQTVGLLLEIQNKLDIEVSIMDFDRDEWATPNKIVAVLEELR.

The 78-residue stretch at 1-78 folds into the Carrier domain; it reads MEFRDQVLDL…KIVAVLEELR (78 aa). Ser36 is subject to O-(pantetheine 4'-phosphoryl)serine.

Belongs to the DltC family. Post-translationally, 4'-phosphopantetheine is transferred from CoA to a specific serine of apo-DCP.

It localises to the cytoplasm. It participates in cell wall biogenesis; lipoteichoic acid biosynthesis. Its function is as follows. Carrier protein involved in the D-alanylation of lipoteichoic acid (LTA). The loading of thioester-linked D-alanine onto DltC is catalyzed by D-alanine--D-alanyl carrier protein ligase DltA. The DltC-carried D-alanyl group is further transferred to cell membrane phosphatidylglycerol (PG) by forming an ester bond, probably catalyzed by DltD. D-alanylation of LTA plays an important role in modulating the properties of the cell wall in Gram-positive bacteria, influencing the net charge of the cell wall. The sequence is that of D-alanyl carrier protein from Staphylococcus saprophyticus subsp. saprophyticus (strain ATCC 15305 / DSM 20229 / NCIMB 8711 / NCTC 7292 / S-41).